A 754-amino-acid chain; its full sequence is Gelsolin, cytoplasmic (754 aa).

Residues 1–120 (MVPAFEGAGA…RYLKGGVASG (120 aa)) form an actin-severing region. One copy of the Gelsolin-like 1 repeat lies at 22 to 71 (FEVVPYPKEKYGQFYQGDSYIVLYTRDVNGNLSWDLHFWLGSETSQDEAG). The tract at residues 68-71 (DEAG) is actin-actin interfilament contact point. A 1,2-diacyl-sn-glycero-3-phospho-(1D-myo-inositol-4,5-bisphosphate) contacts are provided by residues 101–108 (LFLSRFKK) and 133–141 (RLFHVKGRR). Residues 143 to 183 (IRIRQVEVGVGSMNKGDCFILDCGSQVYAYMGPSSRKMDRL) form a Gelsolin-like 2 repeat. The tract at residues 209-238 (TASGSEAGESSPGLGGGSPDDVADEDTGVD) is disordered. The span at 210–220 (ASGSEAGESSP) shows a compositional bias: low complexity. Gelsolin-like repeat units follow at residues 266 to 306 (NMIG…KEKV), 414 to 463 (LKLE…DEKA), 538 to 580 (FDTR…EEKA), and 643 to 684 (LRVN…QEKE). An actin-binding, Ca-sensitive region spans residues 386-751 (LLQKNAGPAF…MKAQVPETNA (366 aa)). Residues Gly430, Asp431, Glu461, Asp556, Glu578, Asp659, Asp660, and Glu682 each coordinate Ca(2+).

This sequence belongs to the villin/gelsolin family. In terms of tissue distribution, tail muscle.

The protein localises to the cytoplasm. Its subcellular location is the cytoskeleton. In terms of biological role, calcium-regulated, actin-modulating protein that binds to the plus (or barbed) ends of actin monomers or filaments, preventing monomer exchange (end-blocking or capping). It can promote the assembly of monomers into filaments (nucleation) as well as sever filaments already formed. This chain is Gelsolin, cytoplasmic, found in Homarus americanus (American lobster).